Consider the following 200-residue polypeptide: Insulin, isoform 2 (200 aa).

The disordered stretch occupies residues 148–200 (EVDSSPQPQGSESLPAQPPAQPAPQPEPQQAREPSPEVSCCGLWPRRPQRSQN). Pro residues predominate over residues 163-174 (AQPPAQPAPQPE). The segment covering 175–184 (PQQAREPSPE) has biased composition (low complexity).

As to expression, expressed in pancreas, eye and, to a lower extent, in limb.

This chain is Insulin, isoform 2 (INS-IGF2), found in Homo sapiens (Human).